The following is a 159-amino-acid chain: NADH-quinone oxidoreductase subunit B (159 aa).

Cys32, Cys33, Cys97, and Cys126 together coordinate [4Fe-4S] cluster.

Belongs to the complex I 20 kDa subunit family. NDH-1 is composed of 14 different subunits. Subunits NuoB, C, D, E, F, and G constitute the peripheral sector of the complex. Requires [4Fe-4S] cluster as cofactor.

It is found in the cell inner membrane. The enzyme catalyses a quinone + NADH + 5 H(+)(in) = a quinol + NAD(+) + 4 H(+)(out). NDH-1 shuttles electrons from NADH, via FMN and iron-sulfur (Fe-S) centers, to quinones in the respiratory chain. The immediate electron acceptor for the enzyme in this species is believed to be ubiquinone. Couples the redox reaction to proton translocation (for every two electrons transferred, four hydrogen ions are translocated across the cytoplasmic membrane), and thus conserves the redox energy in a proton gradient. In Helicobacter pylori (strain J99 / ATCC 700824) (Campylobacter pylori J99), this protein is NADH-quinone oxidoreductase subunit B.